A 201-amino-acid polypeptide reads, in one-letter code: MATNVLNSIRERGFLDGQFLIAMPGMFDANFARTVIFVCAHSEDGAMGFILNRPQRLTFPDVLLHLQLLDPDEVIRLPSTTREFQIQAGGPVETGRGFVLHSDDYLSDSSIPVSDDICLTATLDIVRAISRGEGPVKATMLLGYAGWGPGQLEAEITQNGWLTCPAQEELIFSRNLDEKYDRALALMGVSPAMLSTDSGHA.

It belongs to the UPF0301 (AlgH) family.

The polypeptide is UPF0301 protein Smed_0532 (Sinorhizobium medicae (strain WSM419) (Ensifer medicae)).